The sequence spans 250 residues: MAVTKLVLIRHGESQWNNENRFTGWTDVDLSDKGLTEAKQAGQVLKADGYVFDFAYTSVLKRAIHTLWGVLDELDQAWLPVEKSWRLNERHYGALQGLNKAETAEKYGDEQVKQWRRGFAITPPELTREDERFPGHDPRYANLSAAELPTTESLALTIDRVIPYWNETILPRMKSGERIIIAAHGNSIRAMVKFLDNLSEEEILELNIPTGVPLVYEFDDNMKPIKHYYLGNADEIAAKAAAVANQGKAK.

Residues 10–17 (RHGESQWN), 23–24 (TG), R62, 89–92 (ERHY), K100, 116–117 (RR), and 185–186 (GN) contribute to the substrate site. The active-site Tele-phosphohistidine intermediate is H11. E89 functions as the Proton donor/acceptor in the catalytic mechanism.

This sequence belongs to the phosphoglycerate mutase family. BPG-dependent PGAM subfamily. In terms of assembly, homodimer.

The enzyme catalyses (2R)-2-phosphoglycerate = (2R)-3-phosphoglycerate. Its pathway is carbohydrate degradation; glycolysis; pyruvate from D-glyceraldehyde 3-phosphate: step 3/5. In terms of biological role, catalyzes the interconversion of 2-phosphoglycerate and 3-phosphoglycerate. This Sodalis glossinidius (strain morsitans) protein is 2,3-bisphosphoglycerate-dependent phosphoglycerate mutase.